The following is a 222-amino-acid chain: Protein THYLAKOID ASSEMBLY 8, chloroplastic (222 aa).

Residues 1–32 constitute a chloroplast transit peptide; sequence MALSLSQTRPPSLSHSHTLSVIVPKRTFVSIR. PPR repeat units follow at residues 115 to 149 and 150 to 184; these read DLVL…DQRS and DDKA…GWGS.

The protein belongs to the PPR family. P subfamily.

It is found in the plastid. The protein localises to the chloroplast thylakoid membrane. Functionally, essential protein required during embryogenesis. Mediates group II organellar RNA introns splicing (e.g. ycf3-2 and trnA). Binds weakly to specific RNA. Promotes the biogenesis of chloroplast thylakoid membranes. The chain is Protein THYLAKOID ASSEMBLY 8, chloroplastic from Arabidopsis thaliana (Mouse-ear cress).